Here is a 168-residue protein sequence, read N- to C-terminus: Peptide deformylase (168 aa).

C92 and H134 together coordinate Fe cation. E135 is an active-site residue. Residue H138 coordinates Fe cation.

It belongs to the polypeptide deformylase family. Requires Fe(2+) as cofactor.

It catalyses the reaction N-terminal N-formyl-L-methionyl-[peptide] + H2O = N-terminal L-methionyl-[peptide] + formate. Functionally, removes the formyl group from the N-terminal Met of newly synthesized proteins. Requires at least a dipeptide for an efficient rate of reaction. N-terminal L-methionine is a prerequisite for activity but the enzyme has broad specificity at other positions. In Hahella chejuensis (strain KCTC 2396), this protein is Peptide deformylase.